The sequence spans 193 residues: Potassium-transporting ATPase KdpC subunit (193 aa).

A helical transmembrane segment spans residues 14 to 34; sequence ITFTFLVLCGLVYPLIVTGIA.

Belongs to the KdpC family. As to quaternary structure, the system is composed of three essential subunits: KdpA, KdpB and KdpC.

It localises to the cell membrane. In terms of biological role, part of the high-affinity ATP-driven potassium transport (or Kdp) system, which catalyzes the hydrolysis of ATP coupled with the electrogenic transport of potassium into the cytoplasm. This subunit acts as a catalytic chaperone that increases the ATP-binding affinity of the ATP-hydrolyzing subunit KdpB by the formation of a transient KdpB/KdpC/ATP ternary complex. The sequence is that of Potassium-transporting ATPase KdpC subunit from Bacillus thuringiensis subsp. konkukian (strain 97-27).